Consider the following 32-residue polypeptide: Giant hemoglobin AIV chain (32 aa).

The protein belongs to the globin family. Giant hemoglobin is composed of four heme-containing chains (AI to AIV), and two linker chains (AV and AVI).

This chain is Giant hemoglobin AIV chain, found in Lamellibrachia sp. (Deep-sea giant tube worm).